A 212-amino-acid polypeptide reads, in one-letter code: Agglutinin isolectin 1 (212 aa).

The signal sequence occupies residues 1-26 (MKMMSTRALALGAAAVLAFAAATAQA). Residue Q27 is modified to Pyrrolidone carboxylic acid. Chitin-binding type-1 domains lie at 27-68 (QRCG…ACWT), 69-111 (SKRC…PCRA), 112-154 (DIKC…ACST), and 155-197 (DKPC…GCDG). 16 disulfides stabilise this stretch: C29–C44, C38–C50, C43–C57, C61–C66, C72–C87, C81–C93, C86–C100, C104–C109, C115–C130, C124–C136, C129–C143, C147–C152, C158–C173, C167–C179, C172–C186, and C190–C195. Substrate is bound at residue 36–38 (MEC). 88-99 (SQYGYCGFGAEY) is a binding site for substrate. 140-141 (SE) lines the substrate pocket. Residues 198 to 212 (VFAEAITANSTLLQE) constitute a propeptide that is removed on maturation.

In terms of assembly, homodimer, u-shaped.

Its function is as follows. N-acetyl-D-glucosamine / N-acetyl-D-neuraminic acid binding lectin. The polypeptide is Agglutinin isolectin 1 (Triticum aestivum (Wheat)).